We begin with the raw amino-acid sequence, 503 residues long: Glutamate/gamma-aminobutyrate antiporter (503 aa).

L-glutamate is bound at residue 33–43 (LHLVFFLLLGG). 7 helical membrane passes run 35-55 (LVFFLLLGGLLWFLPVALCAA), 153-173 (FVVGIVIPSVILFGLAAAYFI), 194-214 (VSTLVVFVSFILAYMGVEASA), 232-252 (ILLVILAISLDAIGGFSVAAV), 366-386 (LTVVIYLVGYLLFFIVYFVLI), 407-427 (IIAGIGFLLSIFALFISFVPP), and 440-460 (MILLISFVVTAILPFIIYELH).

The protein belongs to the amino acid-polyamine-organocation (APC) superfamily. Glutamate:GABA antiporter (GGA) (TC 2.A.3.7) family.

Its subcellular location is the cell membrane. The catalysed reaction is 4-aminobutanoate(in) + L-glutamate(out) = 4-aminobutanoate(out) + L-glutamate(in). Functionally, involved in glutaminase-dependent acid resistance. Exchanges extracellular glutamate (Glu) for intracellular gamma-aminobutyric acid (GABA) under acidic conditions. The sequence is that of Glutamate/gamma-aminobutyrate antiporter from Lactococcus lactis subsp. cremoris (strain MG1363).